Reading from the N-terminus, the 458-residue chain is Protein amnionless (458 aa).

An N-terminal signal peptide occupies residues 1–19 (MGALGRVLLWLQLCAMTRA). Over 20–362 (AYKLWVPNTS…ELNQSSSGAG (343 aa)) the chain is Extracellular. The N-linked (GlcNAc...) asparagine glycan is linked to Asn-27. 6 disulfide bridges follow: Cys-43/Cys-96, Cys-137/Cys-213, Cys-205/Cys-211, Cys-223/Cys-249, Cys-234/Cys-250, and Cys-239/Cys-253. The segment at 67–87 (SDMLLPLDGELVLASGAALSA) is interaction with CUBN. One can recognise a VWFC domain in the interval 203 to 254 (QACTDASGCVCGNAEMLPWICASLLQPLGGRCPQAACQDPLLPQGQCCDLCG). N-linked (GlcNAc...) asparagine glycosylation occurs at Asn-355. A helical transmembrane segment spans residues 363–383 (LAGGVAALVLLALLGTVLLLL). The Cytoplasmic segment spans residues 384–458 (HRSGRLRWRR…LFAGEAEAEA (75 aa)).

Interacts (via extracellular region) with CUBN/cubilin. This gives rise to a huge complex containing one AMN chain and three CUBN chains. In terms of processing, N-glycosylated. A soluble form arises by proteolytic removal of the membrane anchor. Expressed in polarized epithelial cells which are specialized in resorption or transport, specifically kidney proximal tubules and intestinal epithelium.

The protein resides in the apical cell membrane. It localises to the cell membrane. The protein localises to the endosome membrane. Its subcellular location is the membrane. It is found in the coated pit. Its function is as follows. Membrane-bound component of the endocytic receptor formed by AMN and CUBN. Required for normal CUBN glycosylation and trafficking to the cell surface. The complex formed by AMN and CUBN is required for efficient absorption of vitamin B12. Required for normal CUBN-mediated protein transport in the kidney. The chain is Protein amnionless (Amn) from Mus musculus (Mouse).